A 515-amino-acid chain; its full sequence is Fibril protein (515 aa).

Met1 is modified (blocked amino end (Met)). 4 helical regions span residues 21–34, 206–228, 357–376, and 426–440; these read VKKY…IQHV, HKFK…FNLL, KIET…AEKC, and SNEF…LKDV.

Its subcellular location is the cytoplasm. The protein resides in the cytoskeleton. Its function is as follows. Acts as a cytoskeletal structure involved in the shape and motility of spiroplasmas. This is Fibril protein from Spiroplasma citri.